A 409-amino-acid polypeptide reads, in one-letter code: TNF receptor-associated factor family protein DDB_G0273435/DDB_G0273505 (409 aa).

The segment at 20–59 adopts an RING-type; degenerate zinc-finger fold; it reads CQLCCNLMNESVSCPNGHCLCKGCFHKQIETVKSECPICC. TRAF-type zinc fingers lie at residues 75 to 145 and 145 to 201; these read KHIN…EIEN and NHQD…HELS. The stretch at 221–250 forms a coiled coil; that stretch reads HQSLLKSTSKQLKQLRSSCEELETKLINND. The region spanning 252–380 is the MATH domain; sequence SFNGRWIIKQ…NDQLIIKFNI (129 aa).

Belongs to the TNF receptor-associated factor family. A subfamily.

Its subcellular location is the cytoplasm. Functionally, probable adapter protein and signal transducer that links members of the tumor necrosis factor receptor family to different signaling pathways by association with the receptor cytoplasmic domain and kinases. In Dictyostelium discoideum (Social amoeba), this protein is TNF receptor-associated factor family protein DDB_G0273435/DDB_G0273505.